A 435-amino-acid polypeptide reads, in one-letter code: MIVNVIGAGLAGSEVAYNLGKRGIRVRLFEMRPKKMTEVHKTGYFAELVCSNSLKSEDITNAEGLLKAEMRLMGSITLEAAEKARVPSGKALAVDRNIFAKEVTEVIERLESVEIIREEVTEFDPEEGIWVVATGPATSDGLLPFLKKLLGDDLLFFFDAVSPIVTFESIDMECAFWGDRFGKGKDYINCPLTKEEYEEFWKALVEAEVIEMEDFDRKLLFERCQPIEEIARSGKDALRYGPLRPTGLVDPRTGKEPYAVVQLRREDKEGRFYSLVGFQTRLKWSEQKRVLRKIPCLRNAEIVRYGVMHRNVYINSPKLLDIFFRLKKHPNIFFAGQITGVEGYMESAASGIYVAYNVHRILKGLSPLKLPEETMMGALFSYIIEKVEGDLKPMYANFGLLPPLKVRVKDKFEKRKKLAERAIETMKKFLEENPW.

An FAD-binding site is contributed by 7–12; it reads GAGLAG.

Belongs to the MnmG family. TrmFO subfamily. FAD is required as a cofactor.

Its subcellular location is the cytoplasm. The catalysed reaction is uridine(54) in tRNA + (6R)-5,10-methylene-5,6,7,8-tetrahydrofolate + NADH + H(+) = 5-methyluridine(54) in tRNA + (6S)-5,6,7,8-tetrahydrofolate + NAD(+). It carries out the reaction uridine(54) in tRNA + (6R)-5,10-methylene-5,6,7,8-tetrahydrofolate + NADPH + H(+) = 5-methyluridine(54) in tRNA + (6S)-5,6,7,8-tetrahydrofolate + NADP(+). Its function is as follows. Catalyzes the folate-dependent formation of 5-methyl-uridine at position 54 (M-5-U54) in all tRNAs. The protein is Methylenetetrahydrofolate--tRNA-(uracil-5-)-methyltransferase TrmFO of Thermotoga maritima (strain ATCC 43589 / DSM 3109 / JCM 10099 / NBRC 100826 / MSB8).